Reading from the N-terminus, the 491-residue chain is Cytochrome P450 2F2 (491 aa).

Cys436 is a heme binding site.

This sequence belongs to the cytochrome P450 family. Requires heme as cofactor.

It is found in the endoplasmic reticulum membrane. Its subcellular location is the microsome membrane. Its function is as follows. Involved in the regio- and stereoselective transformation of naphthalene to trans-1R-hydroxy-2R-glutathionyl-1,2-dihydronaphthalene in the presence of glutathione and glutathione S-transferases. It specifically catalyzes the production of a very reactive and potentially toxic intermediate, the 2R,2S arene oxide, that is associated with necrosis of the unciliated bronchiolar epithelial cells or club cells in lung. This Rattus norvegicus (Rat) protein is Cytochrome P450 2F2 (Cyp2f2).